The sequence spans 108 residues: Small ribosomal subunit protein uS17 (108 aa).

The protein belongs to the universal ribosomal protein uS17 family. In terms of assembly, part of the 30S ribosomal subunit.

In terms of biological role, one of the primary rRNA binding proteins, it binds specifically to the 5'-end of 16S ribosomal RNA. This Methanospirillum hungatei JF-1 (strain ATCC 27890 / DSM 864 / NBRC 100397 / JF-1) protein is Small ribosomal subunit protein uS17.